We begin with the raw amino-acid sequence, 237 residues long: Probable transcriptional regulatory protein MCAP_0598 (237 aa).

Belongs to the TACO1 family.

Its subcellular location is the cytoplasm. The chain is Probable transcriptional regulatory protein MCAP_0598 from Mycoplasma capricolum subsp. capricolum (strain California kid / ATCC 27343 / NCTC 10154).